Reading from the N-terminus, the 445-residue chain is Inward rectifier potassium channel 4 (445 aa).

Over 1–55 (MHGHNRNGQAHVPRRKRRNRFVKKNGQCNVYFANLSNKSQRYMADIFTTCVDTRW) the chain is Cytoplasmic. Residues 56 to 80 (RYMLMIFSAAFLVSWLFFGLLFWWI) traverse the membrane as a helical segment. The Extracellular portion of the chain corresponds to 81–119 (AFFHGDLEASPSVPAVGGPGGNGGESPNAPKPCIMHVNG). An intramembrane region (helical; Pore-forming) is located at residues 120 to 131 (FLGAFLFSVETQ). Positions 132 to 138 (TTIGYGF) form an intramembrane region, pore-forming. The Selectivity filter motif lies at 133-138 (TIGYGF). Topologically, residues 139 to 147 (RCVTEECPL) are extracellular. A helical transmembrane segment spans residues 148–169 (AVIAVVVQSIVGCVIDSFMIGT). The Cytoplasmic portion of the chain corresponds to 170–445 (IMAKMARPKK…NISYRRESRI (276 aa)). A PDZ-binding motif is present at residues 443-445 (SRI).

Belongs to the inward rectifier-type potassium channel (TC 1.A.2.1) family. KCNJ4 subfamily. Homomultimeric and heteromultimeric association with KCNJ2 and KCNJ12. Interacts with DLG2 and DLG4. Associates, via its PDZ-recognition domain, with a complex containing LIN7A, LIN7B, LIN7C, DLG1, CASK and APBA1. Interacts with TAX1BP3. TAX1BP3 competes with LIN7 family members for KCNJ4 binding. Highly expressed in the forebrain, moderately in skeletal muscle. Im olfactory bulb, specifically expressed at the postsynaptic membrane of dendritic spines of granule cells.

It is found in the cell membrane. The protein resides in the postsynaptic cell membrane. It localises to the cytoplasmic vesicle membrane. The catalysed reaction is K(+)(in) = K(+)(out). In terms of biological role, inward rectifier potassium channels are characterized by a greater tendency to allow potassium to flow into the cell rather than out of it. Their voltage dependence is regulated by the concentration of extracellular potassium; as external potassium is raised, the voltage range of the channel opening shifts to more positive voltages. The inward rectification is mainly due to the blockage of outward current by internal magnesium. Can be blocked by extracellular barium and cesium. The chain is Inward rectifier potassium channel 4 (Kcnj4) from Mus musculus (Mouse).